Consider the following 564-residue polypeptide: Proline--tRNA ligase (564 aa).

It belongs to the class-II aminoacyl-tRNA synthetase family. ProS type 1 subfamily. As to quaternary structure, homodimer.

Its subcellular location is the cytoplasm. The catalysed reaction is tRNA(Pro) + L-proline + ATP = L-prolyl-tRNA(Pro) + AMP + diphosphate. Functionally, catalyzes the attachment of proline to tRNA(Pro) in a two-step reaction: proline is first activated by ATP to form Pro-AMP and then transferred to the acceptor end of tRNA(Pro). As ProRS can inadvertently accommodate and process non-cognate amino acids such as alanine and cysteine, to avoid such errors it has two additional distinct editing activities against alanine. One activity is designated as 'pretransfer' editing and involves the tRNA(Pro)-independent hydrolysis of activated Ala-AMP. The other activity is designated 'posttransfer' editing and involves deacylation of mischarged Ala-tRNA(Pro). The misacylated Cys-tRNA(Pro) is not edited by ProRS. This Xanthomonas campestris pv. campestris (strain 8004) protein is Proline--tRNA ligase.